An 86-amino-acid chain; its full sequence is Molybdopterin synthase sulfur carrier subunit (86 aa).

At G86 the chain carries 1-thioglycine; alternate. Position 86 is a glycyl adenylate; alternate (G86).

It belongs to the MoaD family. MOCS2A subfamily. Heterotetramer; composed of 2 small (mocs2s) and 2 large (mocs2l) subunits. In terms of processing, C-terminal thiocarboxylation occurs in 2 steps, it is first acyl-adenylated (-COAMP) via the hesA/moeB/thiF part of mocs3, then thiocarboxylated (-COSH) via the rhodanese domain of mocs3.

Its subcellular location is the cytoplasm. Its pathway is cofactor biosynthesis; molybdopterin biosynthesis. In terms of biological role, acts as a sulfur carrier required for molybdopterin biosynthesis. Component of the molybdopterin synthase complex that catalyzes the conversion of precursor Z into molybdopterin by mediating the incorporation of 2 sulfur atoms into precursor Z to generate a dithiolene group. In the complex, serves as sulfur donor by being thiocarboxylated (-COSH) at its C-terminus by mocs3. After interaction with mocs2l, the sulfur is then transferred to precursor Z to form molybdopterin. The protein is Molybdopterin synthase sulfur carrier subunit (mocs2s) of Dictyostelium discoideum (Social amoeba).